The chain runs to 293 residues: Protein transport protein yif1 (293 aa).

Topologically, residues 1-139 are cytoplasmic; the sequence is MPPKLYHPQP…PPAEDLNSPD (139 aa). A helical membrane pass occupies residues 140–160; it reads MYIPLMAFTTHILLLCALAGL. Over 161–175 the chain is Lumenal; the sequence is QDDFQPELFGLRASK. Residues 176 to 196 form a helical membrane-spanning segment; that stretch reads ACAVVLVEFLATRLGCYLLNI. Residues 197–201 are Cytoplasmic-facing; the sequence is SSQSQ. The chain crosses the membrane as a helical span at residues 202 to 222; it reads VLDLLAFSGYKFVGLILTSLS. Residues 223–226 are Lumenal-facing; the sequence is KLFE. A helical membrane pass occupies residues 227-247; sequence MPWVTRFVFLYMYLATAFFLL. Residues 248–271 are Cytoplasmic-facing; sequence RSLKYAVLPESTMAINATITSHQR. A helical transmembrane segment spans residues 272–292; sequence SRRIYFLFFIAASQILFMYVL. A topological domain (lumenal) is located at residue S293.

Belongs to the YIF1 family. Component of the yip1-yif1 complex, composed of at least yif1, yip1 and yos1. The complex interacts with the ER to Golgi SNAREs bos1 and sec22.

It is found in the endoplasmic reticulum membrane. The protein localises to the golgi apparatus membrane. Its subcellular location is the cytoplasmic vesicle. It localises to the COPII-coated vesicle. Functionally, required for fusion of ER-derived vesicles with the Golgi during ER-to-Golgi protein transport. May be involved in proper membrane localization of Rab GTPases. The chain is Protein transport protein yif1 from Schizosaccharomyces pombe (strain 972 / ATCC 24843) (Fission yeast).